The chain runs to 172 residues: uncharacterized protein (172 aa).

This is an uncharacterized protein from Mycoplasma pneumoniae (strain ATCC 29342 / M129 / Subtype 1) (Mycoplasmoides pneumoniae).